The primary structure comprises 324 residues: Beta-ketoacyl-[acyl-carrier-protein] synthase III (324 aa).

Residues Cys-116 and His-251 contribute to the active site. Positions 252–256 (QANLR) are ACP-binding. Residue Asn-281 is part of the active site.

The protein belongs to the thiolase-like superfamily. FabH family. In terms of assembly, homodimer.

The protein localises to the cytoplasm. It carries out the reaction malonyl-[ACP] + acetyl-CoA + H(+) = 3-oxobutanoyl-[ACP] + CO2 + CoA. The protein operates within lipid metabolism; fatty acid biosynthesis. In terms of biological role, catalyzes the condensation reaction of fatty acid synthesis by the addition to an acyl acceptor of two carbons from malonyl-ACP. Catalyzes the first condensation reaction which initiates fatty acid synthesis and may therefore play a role in governing the total rate of fatty acid production. Possesses both acetoacetyl-ACP synthase and acetyl transacylase activities. Its substrate specificity determines the biosynthesis of branched-chain and/or straight-chain of fatty acids. The chain is Beta-ketoacyl-[acyl-carrier-protein] synthase III from Xylella fastidiosa (strain Temecula1 / ATCC 700964).